The chain runs to 260 residues: Meiotic recombination protein rec6 (260 aa).

The segment at 197-222 is disordered; sequence QYSESSLLDDSQLLCSSPPVDSTEEA. A compositionally biased stretch (low complexity) spans 199–213; the sequence is SESSLLDDSQLLCSS.

This sequence belongs to the TOP6B-like family. As to quaternary structure, component of the DSB catalytic core (DSBC) complex, composed of at least rec12, rec6 and rec14. The complex interacts with mde2.

Functionally, required for formation of the rec12-mediated double-strand breaks (DSBs) that initiate meiotic recombination. May be involved primarily in the early steps of meiotic recombination. The protein is Meiotic recombination protein rec6 of Schizosaccharomyces pombe (strain 972 / ATCC 24843) (Fission yeast).